Reading from the N-terminus, the 305-residue chain is UDP-3-O-acyl-N-acetylglucosamine deacetylase (305 aa).

The Zn(2+) site is built by His79, His238, and Asp242. His265 (proton donor) is an active-site residue.

The protein belongs to the LpxC family. The cofactor is Zn(2+).

It catalyses the reaction a UDP-3-O-[(3R)-3-hydroxyacyl]-N-acetyl-alpha-D-glucosamine + H2O = a UDP-3-O-[(3R)-3-hydroxyacyl]-alpha-D-glucosamine + acetate. It functions in the pathway glycolipid biosynthesis; lipid IV(A) biosynthesis; lipid IV(A) from (3R)-3-hydroxytetradecanoyl-[acyl-carrier-protein] and UDP-N-acetyl-alpha-D-glucosamine: step 2/6. In terms of biological role, catalyzes the hydrolysis of UDP-3-O-myristoyl-N-acetylglucosamine to form UDP-3-O-myristoylglucosamine and acetate, the committed step in lipid A biosynthesis. This chain is UDP-3-O-acyl-N-acetylglucosamine deacetylase, found in Shigella boydii serotype 18 (strain CDC 3083-94 / BS512).